The sequence spans 494 residues: MEPLTIVSLVVASLFLFAFWALSPKTSKNLPPGPPKLPIIGNIHQLKSPTPHRVLRNLARKYGPIMHLQLGQVSTVVVSTPRLAREIMKTNDISFADRPTTTTSQIFFYKAQDIGWAPYGEYWRQMKKICTLELLSAKKVRSFSSIREEELSRISKVLESQAGTPINFTEMTVEMVNNVICKATLGDSCKDQATLIEVLYDVLKTLSAFNLASYYPGLQFLNVILGKKAKWLKMQKQLDDILEDVLKEHRSKGSNKSDQEDLVDVLLRVKDTGGLDFTVTDEHVKAVVLDMLTAGTDTSSATLEWAMTELMRNPHMMKRAQDEVRSVVKGNTITETDLQSLHYLKLIVKETLRLHAPTPLLVPRECRQDCNVDGYDIPAKTKILVNAWACGTDPDSWKDPESFIPERFENCPINYMGADFEFIPFGAGRRICPGLTFGLSMVEYPLANFLYHFDWKLPNGLKPHELDITEITGISTSLKHQLKIVPMIPKSIAK.

Residues 3 to 23 traverse the membrane as a helical segment; it reads PLTIVSLVVASLFLFAFWALS. Cysteine 432 is a binding site for heme.

This sequence belongs to the cytochrome P450 family. The cofactor is heme.

It localises to the membrane. It carries out the reaction germacra-1(10),4,11(13)-trien-12-oate + reduced [NADPH--hemoprotein reductase] + O2 = (+)-costunolide + oxidized [NADPH--hemoprotein reductase] + 2 H2O. Hydroxylates germacrene A acid to 6-alpha-hydroxy-germacrne A acid, a precursor of sesquiterpene lactones that spontaneously undergoes a lactonization which yields costunolide. Costunolide can then spontaneously conjugate to glutathione or cysteine. In Cichorium intybus (Chicory), this protein is Costunolide synthase (CYP71BL3).